Consider the following 250-residue polypeptide: Uracil-DNA glycosylase (250 aa).

Catalysis depends on D78, which acts as the Proton acceptor. The tract at residues 228 to 250 (RGQKPVDWSGEQNNASRQGEFAL) is disordered.

Belongs to the uracil-DNA glycosylase (UDG) superfamily. UNG family.

It is found in the cytoplasm. It carries out the reaction Hydrolyzes single-stranded DNA or mismatched double-stranded DNA and polynucleotides, releasing free uracil.. Excises uracil residues from the DNA which can arise as a result of misincorporation of dUMP residues by DNA polymerase or due to deamination of cytosine. The polypeptide is Uracil-DNA glycosylase (Bordetella parapertussis (strain 12822 / ATCC BAA-587 / NCTC 13253)).